A 125-amino-acid polypeptide reads, in one-letter code: Small ribosomal subunit protein bS6 (125 aa).

Residues S100 to E125 are disordered. Basic and acidic residues predominate over residues K104–T113. Over residues E116–E125 the composition is skewed to acidic residues.

The protein belongs to the bacterial ribosomal protein bS6 family.

Its function is as follows. Binds together with bS18 to 16S ribosomal RNA. This is Small ribosomal subunit protein bS6 from Histophilus somni (strain 129Pt) (Haemophilus somnus).